Consider the following 261-residue polypeptide: Hydroxyethylthiazole kinase (261 aa).

Methionine 38 contributes to the substrate binding site. ATP-binding residues include arginine 114 and threonine 159. Glycine 186 contacts substrate.

The protein belongs to the Thz kinase family. Mg(2+) is required as a cofactor.

It catalyses the reaction 5-(2-hydroxyethyl)-4-methylthiazole + ATP = 4-methyl-5-(2-phosphooxyethyl)-thiazole + ADP + H(+). Its pathway is cofactor biosynthesis; thiamine diphosphate biosynthesis; 4-methyl-5-(2-phosphoethyl)-thiazole from 5-(2-hydroxyethyl)-4-methylthiazole: step 1/1. In terms of biological role, catalyzes the phosphorylation of the hydroxyl group of 4-methyl-5-beta-hydroxyethylthiazole (THZ). The sequence is that of Hydroxyethylthiazole kinase from Streptococcus suis (strain 05ZYH33).